The following is a 45-amino-acid chain: Photosystem II reaction center protein K (45 aa).

The propeptide occupies 1–8 (MTQIFLIG). The helical transmembrane segment at 20–40 (IVDVLPIIPVLFLLLAFVWQA) threads the bilayer.

Belongs to the PsbK family. PSII is composed of 1 copy each of membrane proteins PsbA, PsbB, PsbC, PsbD, PsbE, PsbF, PsbH, PsbI, PsbJ, PsbK, PsbL, PsbM, PsbT, PsbX, PsbY, PsbZ, Psb30/Ycf12, at least 3 peripheral proteins of the oxygen-evolving complex and a large number of cofactors. It forms dimeric complexes.

The protein resides in the plastid. It localises to the chloroplast thylakoid membrane. One of the components of the core complex of photosystem II (PSII). PSII is a light-driven water:plastoquinone oxidoreductase that uses light energy to abstract electrons from H(2)O, generating O(2) and a proton gradient subsequently used for ATP formation. It consists of a core antenna complex that captures photons, and an electron transfer chain that converts photonic excitation into a charge separation. This is Photosystem II reaction center protein K from Ostreococcus tauri.